The chain runs to 428 residues: GTPase Obg (428 aa).

Positions 1–158 (MFVDQVKIYV…RDVILELKVL (158 aa)) constitute an Obg domain. One can recognise an OBG-type G domain in the interval 159-329 (ADVGLVGFPS…LLFEVANLIE (171 aa)). GTP contacts are provided by residues 165–172 (GFPSVGKS), 190–194 (FTTIV), 212–215 (DLPG), 282–285 (NKMD), and 310–312 (SAV). Mg(2+)-binding residues include serine 172 and threonine 192. Residues 350-428 (KFDTEGVKFE…ILEYEFEFID (79 aa)) form the OCT domain.

It belongs to the TRAFAC class OBG-HflX-like GTPase superfamily. OBG GTPase family. As to quaternary structure, monomer. Requires Mg(2+) as cofactor.

The protein localises to the cytoplasm. In terms of biological role, an essential GTPase which binds GTP, GDP and possibly (p)ppGpp with moderate affinity, with high nucleotide exchange rates and a fairly low GTP hydrolysis rate. Plays a role in control of the cell cycle, stress response, ribosome biogenesis and in those bacteria that undergo differentiation, in morphogenesis control. The polypeptide is GTPase Obg (Bacillus cereus (strain B4264)).